Consider the following 98-residue polypeptide: Large ribosomal subunit protein bL28 (98 aa).

This sequence belongs to the bacterial ribosomal protein bL28 family.

The chain is Large ribosomal subunit protein bL28 from Beijerinckia indica subsp. indica (strain ATCC 9039 / DSM 1715 / NCIMB 8712).